An 86-amino-acid polypeptide reads, in one-letter code: Large ribosomal subunit protein uL23 (86 aa).

Belongs to the universal ribosomal protein uL23 family. As to quaternary structure, part of the 50S ribosomal subunit. Contacts protein L29.

Its function is as follows. Binds to 23S rRNA. One of the proteins that surrounds the polypeptide exit tunnel on the outside of the ribosome. This Methanothermobacter thermautotrophicus (strain ATCC 29096 / DSM 1053 / JCM 10044 / NBRC 100330 / Delta H) (Methanobacterium thermoautotrophicum) protein is Large ribosomal subunit protein uL23.